Consider the following 124-residue polypeptide: Ribonuclease pancreatic (124 aa).

The span at 1 to 13 (KETAAAKFERQHM) shows a compositional bias: basic and acidic residues. Residues 1–22 (KETAAAKFERQHMDSSTSAASS) are disordered. Substrate-binding residues include lysine 7 and arginine 10. Residue histidine 12 is the Proton acceptor of the active site. Cystine bridges form between cysteine 26-cysteine 84, cysteine 40-cysteine 95, cysteine 58-cysteine 110, and cysteine 65-cysteine 72. The N-linked (GlcNAc...) asparagine glycan is linked to asparagine 34. Substrate contacts are provided by residues 41-45 (KPVNT), lysine 66, and arginine 85. Catalysis depends on histidine 119, which acts as the Proton donor.

The protein belongs to the pancreatic ribonuclease family. In terms of assembly, monomer. Interacts with and forms tight 1:1 complexes with RNH1. Dimerization of two such complexes may occur. Interaction with RNH1 inhibits this protein. As to expression, pancreas.

Its subcellular location is the secreted. The enzyme catalyses an [RNA] containing cytidine + H2O = an [RNA]-3'-cytidine-3'-phosphate + a 5'-hydroxy-ribonucleotide-3'-[RNA].. It catalyses the reaction an [RNA] containing uridine + H2O = an [RNA]-3'-uridine-3'-phosphate + a 5'-hydroxy-ribonucleotide-3'-[RNA].. Its function is as follows. Endonuclease that catalyzes the cleavage of RNA on the 3' side of pyrimidine nucleotides. Acts on single-stranded and double-stranded RNA. The chain is Ribonuclease pancreatic (RNASE1) from Bison bison (American bison).